A 100-amino-acid polypeptide reads, in one-letter code: Urease subunit gamma (100 aa).

The protein belongs to the urease gamma subunit family. In terms of assembly, heterotrimer of UreA (gamma), UreB (beta) and UreC (alpha) subunits. Three heterotrimers associate to form the active enzyme.

It is found in the cytoplasm. The catalysed reaction is urea + 2 H2O + H(+) = hydrogencarbonate + 2 NH4(+). It participates in nitrogen metabolism; urea degradation; CO(2) and NH(3) from urea (urease route): step 1/1. This Prochlorococcus marinus (strain MIT 9215) protein is Urease subunit gamma.